The following is a 506-amino-acid chain: Exopolyphosphatase (506 aa).

This sequence belongs to the GppA/Ppx family. As to quaternary structure, homodimer. The cofactor is Mg(2+).

The protein resides in the cell membrane. The catalysed reaction is [phosphate](n) + H2O = [phosphate](n-1) + phosphate + H(+). It catalyses the reaction [phosphate](n) + ATP = [phosphate](n+1) + ADP. Exopolyphosphatase activity is stimulated by NH(4)(+) and K(+). Phosphotransferase activity is insensitive to the addition of K(+) or NH(4)(+) ions. Degradation of inorganic polyphosphates (polyP). Releases orthophosphate processively from the ends of the polyP chain. Also has polyphosphate:ADP phosphotransferase activity, catalyzing the production of ATP from ADP and polyP. This Pseudomonas aeruginosa (strain ATCC 15692 / DSM 22644 / CIP 104116 / JCM 14847 / LMG 12228 / 1C / PRS 101 / PAO1) protein is Exopolyphosphatase.